The chain runs to 622 residues: Putative DEAD-box ATP-dependent RNA helicase 44 (622 aa).

The disordered stretch occupies residues 50–97 (DRRSIVQISRSNSDNDDGNRPRDVKRERHRSHDHDRNRESDREFRERE). Positions 66 to 97 (DGNRPRDVKRERHRSHDHDRNRESDREFRERE) are enriched in basic and acidic residues. The Helicase ATP-binding domain occupies 241–436 (IPLGLEQRDV…RKFLRNPVVV (196 aa)). 254–261 (SATGSGKT) provides a ligand contact to ATP. Residues 367-370 (DEAD) carry the DEAD box motif. The region spanning 460–606 (RLKKLIDDLG…LVPPELARHE (147 aa)) is the Helicase C-terminal domain.

Belongs to the DEAD box helicase family. DDX23/PRP28 subfamily.

The catalysed reaction is ATP + H2O = ADP + phosphate + H(+). The chain is Putative DEAD-box ATP-dependent RNA helicase 44 (RH44) from Arabidopsis thaliana (Mouse-ear cress).